Consider the following 357-residue polypeptide: 4-hydroxyphenylpyruvate dioxygenase (357 aa).

2 consecutive VOC domains span residues 12 to 129 (GFEF…LIDR) and 158 to 313 (IIDH…IFSE). Positions 161, 240, and 322 each coordinate Fe cation.

This sequence belongs to the 4HPPD family. Homotetramer. Fe cation serves as cofactor.

The enzyme catalyses 3-(4-hydroxyphenyl)pyruvate + O2 = homogentisate + CO2. It functions in the pathway amino-acid degradation; L-phenylalanine degradation; acetoacetate and fumarate from L-phenylalanine: step 3/6. The polypeptide is 4-hydroxyphenylpyruvate dioxygenase (hpd) (Pseudomonas sp. (strain P.J. 874)).